The chain runs to 197 residues: UPF0056 inner membrane protein YhgN (197 aa).

The Periplasmic portion of the chain corresponds to 1-3 (MNE). Residues 4–24 (IISAAVLLILIMDPLGNLPIF) form a helical membrane-spanning segment. The Cytoplasmic portion of the chain corresponds to 25-44 (MSVLKHTEPKRRRAIMVREL). The chain crosses the membrane as a helical span at residues 45-65 (LIALLVMLVFLFAGEKILAFL). Residues 66 to 71 (SLRAET) lie on the Periplasmic side of the membrane. A helical membrane pass occupies residues 72–92 (VSISGGIILFLIAIKMIFPSA). At 93-105 (SGNSSGLPAGEEP) the chain is on the cytoplasmic side. The chain crosses the membrane as a helical span at residues 106–126 (FIVPLAIPLVAGPTILATLML). The Periplasmic portion of the chain corresponds to 127–138 (LSHQYPNQMGHL). The helical transmembrane segment at 139 to 159 (VIALLLAWGGTFVILLQSSLF) threads the bilayer. The Cytoplasmic portion of the chain corresponds to 160–173 (LRLLGEKGVNALER). A helical transmembrane segment spans residues 174 to 194 (LMGLILVMMATQMFLDGIRMW). Topologically, residues 195–197 (MKG) are periplasmic.

Belongs to the UPF0056 (MarC) family.

Its subcellular location is the cell inner membrane. The sequence is that of UPF0056 inner membrane protein YhgN (yhgN) from Escherichia coli O157:H7.